We begin with the raw amino-acid sequence, 166 residues long: NADH-quinone oxidoreductase subunit A (166 aa).

3 helical membrane-spanning segments follow: residues 16 to 36 (FAVF…GAYF), 68 to 88 (FYLV…LYAW), and 98 to 118 (IGFI…FYLV). Residues 141-166 (RYASSHPQDISQELSVAGSQQANESR) are disordered.

It belongs to the complex I subunit 3 family. In terms of assembly, NDH-1 is composed of 13 different subunits. Subunits NuoA, H, J, K, L, M, N constitute the membrane sector of the complex.

The protein localises to the cell inner membrane. It carries out the reaction a quinone + NADH + 5 H(+)(in) = a quinol + NAD(+) + 4 H(+)(out). Functionally, NDH-1 shuttles electrons from NADH, via FMN and iron-sulfur (Fe-S) centers, to quinones in the respiratory chain. The immediate electron acceptor for the enzyme in this species is believed to be ubiquinone. Couples the redox reaction to proton translocation (for every two electrons transferred, four hydrogen ions are translocated across the cytoplasmic membrane), and thus conserves the redox energy in a proton gradient. The sequence is that of NADH-quinone oxidoreductase subunit A from Yersinia pseudotuberculosis serotype IB (strain PB1/+).